We begin with the raw amino-acid sequence, 344 residues long: Follistatin (344 aa).

The first 29 residues, 1–29 (MVRPRHQPGGLCLLLLLLCQFMEDRSAQA), serve as a signal peptide directing secretion. The TB domain maps to 30–103 (GNCWLRQAKN…TCDNVDCGPG (74 aa)). Intrachain disulfides connect cysteine 32–cysteine 55, cysteine 42–cysteine 88, cysteine 56–cysteine 91, cysteine 95–cysteine 106, cysteine 100–cysteine 116, cysteine 118–cysteine 150, cysteine 122–cysteine 143, cysteine 132–cysteine 164, cysteine 168–cysteine 179, cysteine 173–cysteine 189, cysteine 192–cysteine 225, cysteine 196–cysteine 218, cysteine 207–cysteine 239, cysteine 245–cysteine 256, cysteine 250–cysteine 267, cysteine 270–cysteine 302, cysteine 274–cysteine 295, and cysteine 284–cysteine 316. In terms of domain architecture, Follistatin-like 1 spans 94–117 (TCDNVDCGPGKKCRMNKKNKPRCV). The 55-residue stretch at 112 to 166 (NKPRCVCAPDCSNITWKGPVCGLDGKTYRNECALLKARCKEQPELEVQYQGKCKK) folds into the Kazal-like 1 domain. N-linked (GlcNAc...) asparagine glycosylation occurs at asparagine 124. The 24-residue stretch at 167 to 190 (TCRDVNCPGSSTCVVDQTNNAYCV) folds into the Follistatin-like 2 domain. A Kazal-like 2 domain is found at 186–241 (NAYCVTCNRICPEPTSSEQYLCGNDGVTYSSACHLRKATCLLGRSIGLAYEGKCIK). One can recognise a Follistatin-like 3 domain in the interval 244–268 (SCEDIQCTGGKKCLWDFKVGRGRCS). Residues 264 to 318 (RGRCSLCDELCPDSKSEEPVCASDNATYASECAMKEAACSSGVLLEVKHSGSCNS) form the Kazal-like 3 domain. Residue asparagine 288 is glycosylated (N-linked (GlcNAc...) asparagine). A disordered region spans residues 314–344 (GSCNSISEDTEEEEEDEDQDYSFPISSILEW). Over residues 321–333 (EDTEEEEEDEDQD) the composition is skewed to acidic residues.

Interacts with GDF11. Interacts with activin A/INHBA. Interacts with myostatin/MSTN.

The protein localises to the secreted. The protein resides in the nucleus. Its subcellular location is the nucleolus. In terms of biological role, multifunctional regulatory protein whose primary function is to antagonize members of the transforming growth factor beta (TGF-beta) superfamily including activin, myostatin, GDF11 or bone morphogenetic proteins (BMPs). Mechanistically, binds to these ligands in the extracellular space, blocking their type II receptor-binding site to inhibit downstream signaling. Plays an essential role in muscle fiber formation and growth both by preventing the repressive effects of myostatin and through SMAD3/AKT/mTOR signaling independently of myostatin. Also promotes neural differentiation by antagonizing the action BMP4. Acts as a specific inhibitor of the biosynthesis and secretion of pituitary follicle stimulating hormone (FSH) by sequestering activin A/INHBA. On the other hand, translocates into the nucleus where it down-regulates rRNA synthesis and ribosome biogenesis to maintain cellular energy homeostasis by binding to rDNA. The protein is Follistatin of Equus caballus (Horse).